Consider the following 357-residue polypeptide: Protein AAR2 homolog (357 aa).

Belongs to the AAR2 family.

The polypeptide is Protein AAR2 homolog (Caenorhabditis elegans).